The primary structure comprises 1083 residues: Error-prone DNA polymerase (1083 aa).

The protein belongs to the DNA polymerase type-C family. DnaE2 subfamily.

The protein localises to the cytoplasm. The catalysed reaction is DNA(n) + a 2'-deoxyribonucleoside 5'-triphosphate = DNA(n+1) + diphosphate. Functionally, DNA polymerase involved in damage-induced mutagenesis and translesion synthesis (TLS). It is not the major replicative DNA polymerase. The chain is Error-prone DNA polymerase from Xanthomonas oryzae pv. oryzae (strain KACC10331 / KXO85).